The chain runs to 110 residues: UPF0102 protein HH_1751 (110 aa).

It belongs to the UPF0102 family.

This is UPF0102 protein HH_1751 from Helicobacter hepaticus (strain ATCC 51449 / 3B1).